The following is a 352-amino-acid chain: NADP-dependent oxidoreductase RED1 (352 aa).

Residues 166-169, Lys-192, Tyr-208, Asn-231, and 285-287 each bind NADP(+); these read GAVG and FIV.

It belongs to the NADP-dependent oxidoreductase L4BD family.

The protein operates within mycotoxin biosynthesis. In terms of biological role, NADP-dependent oxidoreductase; part of the Tox1B locus, one of the 2 loci that mediate the biosynthesis of T-toxin, a family of linear polyketides 37 to 45 carbons in length, of which the major component is 41 carbons, and which leads to high virulence to maize. One of the PKSs (PKS1 or PKS2) could synthesize a precursor, used subsequently by the other PKS as starter unit, to add additional carbons. Variability in the length of the final carbon backbone C35-47 could be achieved by varying the number of condensation cycles, or use of different starter or extender units or might be due to decarboxylation of the penultimate product, catalyzed by DEC1. Additional proteins are required for the biosynthesis of T-toxin, including oxidoreductases RED1, RED2, RED3, LAM1 and OXI1, as well as esterase TOX9. This Cochliobolus heterostrophus (strain C4 / ATCC 48331 / race T) (Southern corn leaf blight fungus) protein is NADP-dependent oxidoreductase RED1.